The primary structure comprises 766 residues: DENN domain-containing protein 1B (766 aa).

The 130-residue stretch at 14-143 (DLVLKVKCHA…YNHPVPKANT (130 aa)) folds into the uDENN domain. Residues 160-296 (GLPTIPESRN…VVSALKNKLK (137 aa)) form the cDENN domain. Positions 298-375 (QSTATGDGVA…DGRLAKLNAG (78 aa)) constitute a dDENN domain. Residues 378 to 382 (FSDIF) carry the FXDXF motif motif. The interval 472 to 523 (NEKGENREKHKLSQTHLKRPHKSLDGTLYDDDDDDDDIERASKISSEDGEET) is disordered. The segment covering 480–492 (KHKLSQTHLKRPH) has biased composition (basic residues). Acidic residues predominate over residues 499–509 (LYDDDDDDDDI). Tyr-500 carries the phosphotyrosine modification. Residues Ser-516, Ser-517, Ser-530, and Ser-533 each carry the phosphoserine modification. Residues 547–556 (DLLGEILDTL) carry the Clathrin box motif. Disordered stretches follow at residues 611 to 634 (LGQD…VSSG) and 652 to 732 (LCAD…KPSK). 2 positions are modified to phosphoserine: Ser-632 and Ser-633. Positions 694–704 (TPGQAPLQSED) are enriched in polar residues. Residues 722 to 732 (KAGKEDTKPSK) are compositionally biased toward basic and acidic residues.

Interacts with RAB35. Interacts with clathrin heavy chain/CLTC. Interacts with components of the adapter protein complex 2 (AP-2) AP2A2 and AP2B1. Interacts with CD3E. Post-translationally, phosphorylated on serine and/or threonine, possibly regulating the guanine nucleotide exchange factor (GEF) activity. As to expression, expressed in a subset of dendritic cells (DCs).

The protein localises to the cytoplasm. The protein resides in the cytosol. It localises to the cytoplasmic vesicle. It is found in the clathrin-coated vesicle. In terms of biological role, guanine nucleotide exchange factor (GEF) for RAB35 that acts as a regulator of T-cell receptor (TCR) internalization in TH2 cells. Acts by promoting the exchange of GDP to GTP, converting inactive GDP-bound RAB35 into its active GTP-bound form. Plays a role in clathrin-mediated endocytosis. Controls cytokine production in TH2 lymphocytes by controlling the rate of TCR internalization and routing to endosomes: acts by mediating clathrin-mediated endocytosis of TCR via its interaction with the adapter protein complex 2 (AP-2) and GEF activity. Dysregulation leads to impaired TCR down-modulation and recycling, affecting cytokine production in TH2 cells. The polypeptide is DENN domain-containing protein 1B (Mus musculus (Mouse)).